Here is a 438-residue protein sequence, read N- to C-terminus: Transposon Ty2-C Gag polyprotein (438 aa).

Composition is skewed to polar residues over residues 1–11 (MESQQLHQNPR), 19–39 (ASVT…SASN), and 49–60 (KVNSQQETTPGT). Disordered stretches follow at residues 1 to 88 (MESQ…YQQH), 365 to 397 (NVSR…AKAH), and 419 to 438 (SSQY…TERI). The segment at 295–397 (ENNINVSDRL…SSKPRAAKAH (103 aa)) is RNA-binding. The segment covering 369-382 (TSPNTTNTKVTTRN) has biased composition (low complexity).

As to quaternary structure, homotrimer.

It localises to the cytoplasm. In terms of biological role, capsid protein (CA) is the structural component of the virus-like particle (VLP), forming the shell that encapsulates the retrotransposons dimeric RNA genome. The particles are assembled from trimer-clustered units and there are holes in the capsid shells that allow for the diffusion of macromolecules. CA also has nucleocapsid-like chaperone activity, promoting primer tRNA(i)-Met annealing to the multipartite primer-binding site (PBS), dimerization of Ty2 RNA and initiation of reverse transcription. In Saccharomyces cerevisiae (strain ATCC 204508 / S288c) (Baker's yeast), this protein is Transposon Ty2-C Gag polyprotein (TY2A-C).